The primary structure comprises 908 residues: MKIISPVLSNLVFSRSIKVLLCLLWIGYSQGTTHVLRFGGIFEYVESGPMGAEELAFRFAVNTINRNRTLLPNTTLTYDTQKINLYDSFEASKKACDQLSLGVAAIFGPSHSSSANAVQSICNALGVPHIQTRWKHQVSDNKDSFYVSLYPDFSSLSRAILDLVQFFKWKTVTVVYDDSTGLIRLQELIKAPSRYNLRLKIRQLPADTKDAKPLLKEMKRGKEFHVIFDCSHEMAAGILKQALAMGMMTEYYHYIFTTLDLFALDVEPYRYSGVNMTGFRILNTENTQVSSIIEKWSMERLQAPPKPDSGLLDGFMTTDAALMYDAVHVVSVAVQQFPQMTVSSLQCNRHKPWRFGTRFMSLIKEAHWEGLTGRITFNKTNGLRTDFDLDVISLKEEGLEKIGTWDPASGLNMTESQKGKPANITDSLSNRSLIVTTILEEPYVLFKKSDKPLYGNDRFEGYCIDLLRELSTILGFTYEIRLVEDGKYGAQDDVNGQWNGMVRELIDHKADLAVAPLAITYVREKVIDFSKPFMTLGISILYRKPNGTNPGVFSFLNPLSPDIWMYILLAYLGVSCVLFVIARFSPYEWYNPHPCNPDSDVVENNFTLLNSFWFGVGALMQQGSELMPKALSTRIVGGIWWFFTLIIISSYTANLAAFLTVERMESPIDSADDLAKQTKIEYGAVEDGATMTFFKKSKISTYDKMWAFMSSRRQSVLVKSNEEGIQRVLTSDYAFLMESTTIEFVTQRNCNLTQIGGLIDSKGYGVGTPMGSPYRDKITIAILQLQEEGKLHMMKEKWWRGNGCPEEESKEASALGVQNIGGIFIVLAAGLVLSVFVAVGEFLYKSKKNAQLEKRSFCSAMVEELRMSLKCQRRLKHKPQAPVIVKTEEVINMHTFNDRRLPGKETMA.

Positions 1–31 (MKIISPVLSNLVFSRSIKVLLCLLWIGYSQG) are cleaved as a signal peptide. The Extracellular segment spans residues 32–561 (TTHVLRFGGI…VFSFLNPLSP (530 aa)). Residues asparagine 67, asparagine 73, asparagine 275, asparagine 378, asparagine 412, asparagine 423, and asparagine 430 are each glycosylated (N-linked (GlcNAc...) asparagine). The cysteines at positions 96 and 347 are disulfide-linked. The L-glutamate site is built by proline 516, alanine 518, and arginine 523. The N-linked (GlcNAc...) asparagine glycan is linked to asparagine 546. A helical transmembrane segment spans residues 562–582 (DIWMYILLAYLGVSCVLFVIA). Topologically, residues 583–638 (RFSPYEWYNPHPCNPDSDVVENNFTLLNSFWFGVGALMQQGSELMPKALSTRIVGG) are cytoplasmic. Residues 639–659 (IWWFFTLIIISSYTANLAAFL) traverse the membrane as a helical segment. Topologically, residues 660 to 819 (TVERMESPID…KEASALGVQN (160 aa)) are extracellular. Residues alanine 689, threonine 690, and glutamate 738 each contribute to the L-glutamate site. Residues cysteine 750 and cysteine 804 are joined by a disulfide bond. A glycan (N-linked (GlcNAc...) asparagine) is linked at asparagine 751. The helical transmembrane segment at 820-840 (IGGIFIVLAAGLVLSVFVAVG) threads the bilayer. Residues 841 to 908 (EFLYKSKKNA…RRLPGKETMA (68 aa)) lie on the Cytoplasmic side of the membrane. Serine 846 and serine 868 each carry phosphoserine; by PKC. A Glycyl lysine isopeptide (Lys-Gly) (interchain with G-Cter in SUMO1) cross-link involves residue lysine 886.

The protein belongs to the glutamate-gated ion channel (TC 1.A.10.1) family. GRIK2 subfamily. In terms of assembly, homotetramer and heterotetramer with GRIK5. Tetramers may be formed by the dimerization of dimers. Assembles into a kainate-gated homomeric channel that does not bind AMPA. Can form functional heteromeric receptors with GRIK4 and GRIK5. Can form functional heteromeric receptors with GRIK3. Interacts with DLG4. Interacts with NETO2. Interacts (via C-terminus) with KLHL17 (via kelch repeats); the interaction targets GRIK2 for degradation via ubiquitin-proteasome pathway. Post-translationally, sumoylation mediates kainate receptor-mediated endocytosis and regulates synaptic transmission. Sumoylation is enhanced by PIAS3 and desumoylated by SENP1. Ubiquitinated. Ubiquitination regulates the GRIK2 levels at the synapse by leading kainate receptor degradation through proteasome. In terms of processing, phosphorylated by PKC at Ser-868 upon agonist activation, this directly enhance sumoylation. As to expression, highest expression is found in the olfactory lobe, piriform cortex, dentate gyrus, hippocampus, granular cell layer of the cerebellum, and in caudate-putamen.

It localises to the cell membrane. The protein resides in the postsynaptic cell membrane. It catalyses the reaction Ca(2+)(in) = Ca(2+)(out). It carries out the reaction Na(+)(in) = Na(+)(out). Cold receptor activity activated by temperatures between 10-19 degrees Celsius. Its function is as follows. Ionotropic glutamate receptor that functions as a cation-permeable ligand-gated ion channel, gated by L-glutamate and the glutamatergic agonist kainic acid. L-glutamate acts as an excitatory neurotransmitter at many synapses in the central nervous system. Binding of the excitatory neurotransmitter L-glutamate induces a conformation change, leading to the opening of the cation channel, and thereby converts the chemical signal to an electrical impulse. The receptor then desensitizes rapidly and enters a transient inactive state, characterized by the presence of bound agonist. Modulates cell surface expression of NETO2. In association with GRIK3, involved in presynaptic facilitation of glutamate release at hippocampal mossy fiber synapses. In terms of biological role, independent of its ionotropic glutamate receptor activity, acts as a thermoreceptor conferring sensitivity to cold temperatures. Functions in dorsal root ganglion neurons. The chain is Glutamate receptor ionotropic, kainate 2 (Grik2) from Rattus norvegicus (Rat).